The primary structure comprises 205 residues: Dephospho-CoA kinase (205 aa).

Positions 7 to 205 (IIGVTGRIAS…QGIINYERFE (199 aa)) constitute a DPCK domain. 15-20 (ASGKDT) is a binding site for ATP.

Belongs to the CoaE family.

The protein localises to the cytoplasm. It carries out the reaction 3'-dephospho-CoA + ATP = ADP + CoA + H(+). It functions in the pathway cofactor biosynthesis; coenzyme A biosynthesis; CoA from (R)-pantothenate: step 5/5. Catalyzes the phosphorylation of the 3'-hydroxyl group of dephosphocoenzyme A to form coenzyme A. The protein is Dephospho-CoA kinase of Borreliella burgdorferi (strain ATCC 35210 / DSM 4680 / CIP 102532 / B31) (Borrelia burgdorferi).